The chain runs to 56 residues: Large ribosomal subunit protein bL32 (56 aa).

The segment at 1-37 (MAVQQNKKSRSRRDMRRSHDALTTAAISVDKASGEKH) is disordered. The span at 7–16 (KKSRSRRDMR) shows a compositional bias: basic residues.

The protein belongs to the bacterial ribosomal protein bL32 family.

This chain is Large ribosomal subunit protein bL32 (rpmF), found in Pasteurella multocida (strain Pm70).